The primary structure comprises 163 residues: Large ribosomal subunit protein uL13m (163 aa).

Ser-2 bears the N-acetylserine mark. The propeptide occupies 2 to 4; it reads SQK.

It belongs to the universal ribosomal protein uL13 family. As to quaternary structure, component of the mitochondrial large ribosomal subunit (mt-LSU). Mature yeast 74S mitochondrial ribosomes consist of a small (37S) and a large (54S) subunit. The 37S small subunit contains a 15S ribosomal RNA (15S mt-rRNA) and 34 different proteins. The 54S large subunit contains a 21S rRNA (21S mt-rRNA) and 46 different proteins.

Its subcellular location is the mitochondrion. Its function is as follows. Component of the mitochondrial ribosome (mitoribosome), a dedicated translation machinery responsible for the synthesis of mitochondrial genome-encoded proteins, including at least some of the essential transmembrane subunits of the mitochondrial respiratory chain. The mitoribosomes are attached to the mitochondrial inner membrane and translation products are cotranslationally integrated into the membrane. The chain is Large ribosomal subunit protein uL13m (MRPL23) from Saccharomyces cerevisiae (strain ATCC 204508 / S288c) (Baker's yeast).